Reading from the N-terminus, the 345-residue chain is uncharacterized protein (345 aa).

The protein localises to the plastid. Its subcellular location is the chloroplast. This is an uncharacterized protein from Chlamydomonas moewusii (Chlamydomonas eugametos).